A 295-amino-acid polypeptide reads, in one-letter code: Glycine--tRNA ligase alpha subunit (295 aa).

The protein belongs to the class-II aminoacyl-tRNA synthetase family. As to quaternary structure, tetramer of two alpha and two beta subunits.

Its subcellular location is the cytoplasm. The enzyme catalyses tRNA(Gly) + glycine + ATP = glycyl-tRNA(Gly) + AMP + diphosphate. The sequence is that of Glycine--tRNA ligase alpha subunit from Desulforamulus reducens (strain ATCC BAA-1160 / DSM 100696 / MI-1) (Desulfotomaculum reducens).